The sequence spans 209 residues: Mitochondrial import inner membrane translocase subunit Tim23 (209 aa).

The next 3 membrane-spanning stretches (helical) occupy residues 73-93 (FELA…FGAM), 125-145 (ALWA…GVII), and 181-197 (GLTG…YNNW).

Belongs to the Tim17/Tim22/Tim23 family. As to quaternary structure, component of the TIM23 complex at least composed of TIMM23, TIMM17 (TIMM17A or TIMM17B) and TIMM50; within this complex, directly interacts with TIMM50. The complex interacts with the TIMM44 component of the PAM complex and with DNAJC15. Upon mitochondrial depolarization, interacts with PINK1; the interaction is required for PINK1 accumulation at the outer mitochondrial membrane, kinase activation by autophosphorylation and PRKN recruitement to mitochondria.

The protein resides in the mitochondrion inner membrane. In terms of biological role, essential component of the TIM23 complex, a complex that mediates the translocation of transit peptide-containing proteins across the mitochondrial inner membrane. Has a role in the activation of stress-induced mitophagy by protecting PINK1 from OMA1-mediated degradation and facilitating its accumulation at the outer mitochondrial membrane in response to depolarization. In Homo sapiens (Human), this protein is Mitochondrial import inner membrane translocase subunit Tim23 (TIMM23).